A 208-amino-acid polypeptide reads, in one-letter code: Casparian strip membrane protein 2 (208 aa).

The segment at 1–23 (MDSKSGRSESAINIPESNSTKHK) is disordered. Residues 1–46 (MDSKSGRSESAINIPESNSTKHKSTVVHTATKVAAVAPRGGGWRRG) are Cytoplasmic-facing. Polar residues predominate over residues 8-18 (SESAINIPESN). The helical transmembrane segment at 47–67 (VSIFDFILRICALAAALAATA) threads the bilayer. Residues 68-96 (TMGTTDQTLPFFTQFFQFQASYDDLPAFT) are Extracellular-facing. A helical transmembrane segment spans residues 97 to 117 (FFVVANGIASGYLVLSLPFSI). At 118-129 (ATIVRPHAAAIK) the chain is on the cytoplasmic side. Residues 130–150 (LLLIIFDTVMVAFTAAAAAAA) traverse the membrane as a helical segment. Residues 151 to 184 (AAIVYLAHNGNSKTNWFAICQQFNDFCQRVSGAV) lie on the Extracellular side of the membrane. Residues 185–205 (VASFVAAVILIFLVVLSAVAI) traverse the membrane as a helical segment. Residues 206 to 208 (RKH) are Cytoplasmic-facing.

It belongs to the Casparian strip membrane proteins (CASP) family. In terms of assembly, homodimer and heterodimers.

The protein localises to the cell membrane. In terms of biological role, regulates membrane-cell wall junctions and localized cell wall deposition. Required for establishment of the Casparian strip membrane domain (CSD) and the subsequent formation of Casparian strips, a cell wall modification of the root endodermis that determines an apoplastic barrier between the intraorganismal apoplasm and the extraorganismal apoplasm and prevents lateral diffusion. This chain is Casparian strip membrane protein 2, found in Triphysaria pusilla (Dwarf owl's-clover).